We begin with the raw amino-acid sequence, 34 residues long: Photosystem II reaction center protein M (34 aa).

Residues 5–25 (ILAFIATALFILVPTAFLLII) form a helical membrane-spanning segment.

This sequence belongs to the PsbM family. PSII is composed of 1 copy each of membrane proteins PsbA, PsbB, PsbC, PsbD, PsbE, PsbF, PsbH, PsbI, PsbJ, PsbK, PsbL, PsbM, PsbT, PsbX, PsbY, PsbZ, Psb30/Ycf12, at least 3 peripheral proteins of the oxygen-evolving complex and a large number of cofactors. It forms dimeric complexes.

It localises to the plastid. The protein localises to the chloroplast thylakoid membrane. Functionally, one of the components of the core complex of photosystem II (PSII). PSII is a light-driven water:plastoquinone oxidoreductase that uses light energy to abstract electrons from H(2)O, generating O(2) and a proton gradient subsequently used for ATP formation. It consists of a core antenna complex that captures photons, and an electron transfer chain that converts photonic excitation into a charge separation. This subunit is found at the monomer-monomer interface. This is Photosystem II reaction center protein M from Phaseolus vulgaris (Kidney bean).